Reading from the N-terminus, the 410-residue chain is Replication factor C large subunit (410 aa).

Residue 46-53 (GDPGTGKT) coordinates ATP.

Belongs to the activator 1 small subunits family. RfcL subfamily. In terms of assembly, heteromultimer composed of small subunits (RfcS) and large subunits (RfcL).

Part of the RFC clamp loader complex which loads the PCNA sliding clamp onto DNA. This chain is Replication factor C large subunit, found in Picrophilus torridus (strain ATCC 700027 / DSM 9790 / JCM 10055 / NBRC 100828 / KAW 2/3).